Consider the following 158-residue polypeptide: Cyclic pyranopterin monophosphate synthase (158 aa).

Substrate-binding positions include 75-77 (LCH) and 113-114 (ME). Residue D128 is part of the active site.

This sequence belongs to the MoaC family. In terms of assembly, homohexamer; trimer of dimers.

The catalysed reaction is (8S)-3',8-cyclo-7,8-dihydroguanosine 5'-triphosphate = cyclic pyranopterin phosphate + diphosphate. Its pathway is cofactor biosynthesis; molybdopterin biosynthesis. In terms of biological role, catalyzes the conversion of (8S)-3',8-cyclo-7,8-dihydroguanosine 5'-triphosphate to cyclic pyranopterin monophosphate (cPMP). In Paraburkholderia phytofirmans (strain DSM 17436 / LMG 22146 / PsJN) (Burkholderia phytofirmans), this protein is Cyclic pyranopterin monophosphate synthase.